Consider the following 484-residue polypeptide: Glycogen synthase (484 aa).

Lysine 15 contacts ADP-alpha-D-glucose.

The protein belongs to the glycosyltransferase 1 family. Bacterial/plant glycogen synthase subfamily.

The enzyme catalyses [(1-&gt;4)-alpha-D-glucosyl](n) + ADP-alpha-D-glucose = [(1-&gt;4)-alpha-D-glucosyl](n+1) + ADP + H(+). It functions in the pathway glycan biosynthesis; glycogen biosynthesis. Its function is as follows. Synthesizes alpha-1,4-glucan chains using ADP-glucose. The chain is Glycogen synthase from Syntrophotalea carbinolica (strain DSM 2380 / NBRC 103641 / GraBd1) (Pelobacter carbinolicus).